The primary structure comprises 51 residues: Proteinase inhibitor PTI (51 aa).

Disulfide bonds link Cys3–Cys40, Cys6–Cys24, Cys7–Cys36, and Cys13–Cys49.

This sequence belongs to the protease inhibitor I20 (potato type II proteinase inhibitor) family.

The protein resides in the secreted. In Solanum tuberosum (Potato), this protein is Proteinase inhibitor PTI.